The following is a 179-amino-acid chain: Small ribosomal subunit protein uS5 (179 aa).

Positions 22–85 (MIEKLVAVNR…EYARKRMSNV (64 aa)) constitute an S5 DRBM domain.

This sequence belongs to the universal ribosomal protein uS5 family. In terms of assembly, part of the 30S ribosomal subunit. Contacts proteins S4 and S8.

Its function is as follows. With S4 and S12 plays an important role in translational accuracy. Functionally, located at the back of the 30S subunit body where it stabilizes the conformation of the head with respect to the body. This is Small ribosomal subunit protein uS5 from Xylella fastidiosa (strain M23).